The sequence spans 205 residues: Ribonuclease HII (205 aa).

The RNase H type-2 domain maps to 14–205; that stretch reads ERICGIDEAG…SFKVRRLNEA (192 aa). Residues Asp20, Glu21, and Asp117 each coordinate a divalent metal cation.

This sequence belongs to the RNase HII family. The cofactor is Mn(2+). Mg(2+) serves as cofactor.

The protein localises to the cytoplasm. The catalysed reaction is Endonucleolytic cleavage to 5'-phosphomonoester.. Functionally, endonuclease that specifically degrades the RNA of RNA-DNA hybrids. The protein is Ribonuclease HII of Chlorobium phaeovibrioides (strain DSM 265 / 1930) (Prosthecochloris vibrioformis (strain DSM 265)).